Here is a 368-residue protein sequence, read N- to C-terminus: Nicotinate-nucleotide--dimethylbenzimidazole phosphoribosyltransferase (368 aa).

The Proton acceptor role is filled by glutamate 314. Residues aspartate 344–valine 368 are disordered. The segment covering alanine 349 to glycine 360 has biased composition (low complexity).

Belongs to the CobT family.

It carries out the reaction 5,6-dimethylbenzimidazole + nicotinate beta-D-ribonucleotide = alpha-ribazole 5'-phosphate + nicotinate + H(+). It functions in the pathway nucleoside biosynthesis; alpha-ribazole biosynthesis; alpha-ribazole from 5,6-dimethylbenzimidazole: step 1/2. Catalyzes the synthesis of alpha-ribazole-5'-phosphate from nicotinate mononucleotide (NAMN) and 5,6-dimethylbenzimidazole (DMB). The chain is Nicotinate-nucleotide--dimethylbenzimidazole phosphoribosyltransferase from Corynebacterium efficiens (strain DSM 44549 / YS-314 / AJ 12310 / JCM 11189 / NBRC 100395).